We begin with the raw amino-acid sequence, 380 residues long: Forkhead box protein F1 (380 aa).

Residues 1–19 are compositionally biased toward polar residues; that stretch reads MTAEVQQPSVQTPAHSSPM. Residues 1-49 form a disordered region; the sequence is MTAEVQQPSVQTPAHSSPMTEKPVQTPVMETSSSSSSTKAKKTNAGIRR. The fork-head DNA-binding region spans 52–146; sequence KPPYSYIALI…EEGSFRRRPR (95 aa).

It is found in the nucleus. This chain is Forkhead box protein F1 (foxf1), found in Danio rerio (Zebrafish).